The chain runs to 119 residues: Protein TusC (119 aa).

Belongs to the DsrF/TusC family. Heterohexamer, formed by a dimer of trimers. The hexameric TusBCD complex contains 2 copies each of TusB, TusC and TusD. The TusBCD complex interacts with TusE.

The protein resides in the cytoplasm. Part of a sulfur-relay system required for 2-thiolation of 5-methylaminomethyl-2-thiouridine (mnm(5)s(2)U) at tRNA wobble positions. This Buchnera aphidicola subsp. Schizaphis graminum (strain Sg) protein is Protein TusC.